Here is a 616-residue protein sequence, read N- to C-terminus: Schwannomin-interacting protein 1 homolog (616 aa).

Acidic residues predominate over residues E38–P50. 3 disordered regions span residues E38–S71, L204–F251, and S292–Q320. Composition is skewed to polar residues over residues S62–S71 and L204–T217. A coiled-coil region spans residues L550–N594.

It belongs to the SCHIP1 family. Interacts with ex; the interaction results in recruitment of Schip1 to the apical cell membrane. Interacts with Tao; the interaction enhances Tao kinase activity. Interacts with Mer. In eye disks of the third instar larvae, expressed in all cells (at protein level).

Its subcellular location is the cell junction. The protein localises to the adherens junction. The protein resides in the apical cell membrane. Regulator of the Hippo/SWH (Sav/Wts/Hpo) signaling pathway, a signaling pathway that plays a pivotal role in organ size control and tumor suppression by restricting proliferation and promoting apoptosis. The core of this pathway is composed of a kinase cascade wherein Hippo (hpo), in complex with its regulatory protein Salvador (sav), phosphorylates and activates Warts (wts) in complex with its regulatory protein Mats, which in turn phosphorylates and inactivates the Yorkie (yki) oncoprotein. Schip1 promotes kinase activity of Tao and enhances phosphorylation of hpo by Tao. This is Schwannomin-interacting protein 1 homolog from Drosophila melanogaster (Fruit fly).